A 134-amino-acid chain; its full sequence is Small ribosomal subunit protein bS6 (134 aa).

The tract at residues 103–134 (AAPVKSAEEGTEEVAAEAATEAPAETTTTVEV) is disordered. The span at 118-134 (AEAATEAPAETTTTVEV) shows a compositional bias: low complexity.

The protein belongs to the bacterial ribosomal protein bS6 family.

Binds together with bS18 to 16S ribosomal RNA. The polypeptide is Small ribosomal subunit protein bS6 (Geobacter sp. (strain M21)).